Consider the following 584-residue polypeptide: Cytochrome c oxidase subunit 1 (584 aa).

Residues 1 to 25 (MTAVAPRVDGHVAPQRPEPTGHARK) are disordered. The helical transmembrane segment at 43-63 (IMYIIMSFSFFFLGGLMALLI) threads the bilayer. Residue His-87 coordinates Fe(II)-heme a. Helical transmembrane passes span 90 to 110 (VMLLLYGTPIVWGFANYVLPL), 122 to 142 (LNAFGFWITTVGGVAMLTGFL), 171 to 191 (MWIVGVGATGIGSVASAINML), 214 to 234 (IFVVSVLALLIFPLLLAAALG), 259 to 279 (LFWFFGHPEVYVLALPFFGIV), and 292 to 312 (FGYVGLIFATLSIGALSMAVW). Residues His-265 and Tyr-269 each coordinate Cu cation. The 1'-histidyl-3'-tyrosine (His-Tyr) cross-link spans 265–269 (HPEVY). Residues His-314 and His-315 each coordinate Cu cation. Helical transmembrane passes span 316 to 336 (MFVTGAVLLPFFSFMTFLISV) and 360 to 380 (MIWSVGFMATFLFGGLTGIML). His-398 lines the heme a3 pocket. A run of 3 helical transmembrane segments spans residues 399–419 (FHYTLFGTVVFASCAGVYFWF), 434–454 (IHFWLTFVGFHGTFLIQHWVG), and 477–497 (ISTVFSFLLGLSVIPFIWNVF). A Fe(II)-heme a-binding site is contributed by His-400. The tract at residues 564–584 (HDDINAPELGTAPALASDSSR) is disordered.

In terms of assembly, associates with subunits II, III and IV to form cytochrome c oxidase. The 4 subunit cytochrome c oxidase forms a supercomplex with the menaquinol-cytochrome c reductase complex (cytochrome bc1). Requires Cu(2+) as cofactor. Heme is required as a cofactor.

It localises to the cell membrane. It catalyses the reaction 4 Fe(II)-[cytochrome c] + O2 + 8 H(+)(in) = 4 Fe(III)-[cytochrome c] + 2 H2O + 4 H(+)(out). Its pathway is energy metabolism; oxidative phosphorylation. In terms of biological role, cytochrome c oxidase is the component of the respiratory chain that catalyzes the reduction of oxygen to water. Subunits 1-3 form the functional core of the enzyme complex. CO I is the catalytic subunit of the enzyme. Electrons originating in cytochrome c are transferred via the copper A center of subunit 2 and heme A of subunit 1 to the bimetallic center formed by heme A3 and copper B. The chain is Cytochrome c oxidase subunit 1 (ctaD) from Corynebacterium glutamicum (strain ATCC 13032 / DSM 20300 / JCM 1318 / BCRC 11384 / CCUG 27702 / LMG 3730 / NBRC 12168 / NCIMB 10025 / NRRL B-2784 / 534).